Reading from the N-terminus, the 230-residue chain is Transcription factor bHLH147 (230 aa).

Residues 1 to 17 show a composition bias toward polar residues; that stretch reads MESISPVSNQLLQPTTT. A disordered region spans residues 1-52; that stretch reads MESISPVSNQLLQPTTTSSNSDRSRRKRKKKSSPSSVEKSPSPSISLEKWRS. Residues 33–46 are compositionally biased toward low complexity; the sequence is SPSSVEKSPSPSIS. The 50-residue stretch at 147 to 196 folds into the bHLH domain; that stretch reads KQRATVLRLKAKGLPAVQRKVKVLSRLVPGCRKQSLPVVLEETTDYIAAM. Residues 210-230 form a disordered region; the sequence is VSSSPPPPTPGHEGGQTHMLG.

In terms of assembly, homodimer. Interacts with PRE3.

It localises to the nucleus. Functionally, atypical bHLH transcription factor probably unable to bind DNA. Negatively regulates brassinosteroid signaling. The protein is Transcription factor bHLH147 (BHLH147) of Arabidopsis thaliana (Mouse-ear cress).